Consider the following 101-residue polypeptide: Urease subunit beta (101 aa).

The protein belongs to the urease beta subunit family. Heterotrimer of UreA (gamma), UreB (beta) and UreC (alpha) subunits. Three heterotrimers associate to form the active enzyme.

The protein resides in the cytoplasm. The catalysed reaction is urea + 2 H2O + H(+) = hydrogencarbonate + 2 NH4(+). It participates in nitrogen metabolism; urea degradation; CO(2) and NH(3) from urea (urease route): step 1/1. This chain is Urease subunit beta, found in Hahella chejuensis (strain KCTC 2396).